We begin with the raw amino-acid sequence, 312 residues long: Ribosomal RNA small subunit methyltransferase H (312 aa).

S-adenosyl-L-methionine is bound by residues 33 to 35, Asp-53, Phe-80, Asp-102, and Gln-109; that span reads GGH.

Belongs to the methyltransferase superfamily. RsmH family.

It is found in the cytoplasm. It catalyses the reaction cytidine(1402) in 16S rRNA + S-adenosyl-L-methionine = N(4)-methylcytidine(1402) in 16S rRNA + S-adenosyl-L-homocysteine + H(+). Its function is as follows. Specifically methylates the N4 position of cytidine in position 1402 (C1402) of 16S rRNA. The chain is Ribosomal RNA small subunit methyltransferase H from Heliobacterium mobile (Heliobacillus mobilis).